The primary structure comprises 424 residues: Bone morphogenetic protein 10 (424 aa).

The signal sequence occupies residues 1-21 (MGSLVLTLCALFCLAAYLVSG). Residues 22–316 (SPIMNLEQSP…IYDSTARIRR (295 aa)) constitute a propeptide that is removed on maturation. 2 N-linked (GlcNAc...) asparagine glycosylation sites follow: Asn67 and Asn131. Disulfide bonds link Cys323/Cys389, Cys352/Cys421, and Cys356/Cys423.

This sequence belongs to the TGF-beta family. Homodimer; disulfide-linked. Interacts with FBN1 (via N-terminal domain) and FBN2. Interacts with ENG. In terms of tissue distribution, detected in mammary epithelia (at protein level).

It localises to the secreted. Required for maintaining the proliferative activity of embryonic cardiomyocytes by preventing premature activation of the negative cell cycle regulator CDKN1C/p57KIP and maintaining the required expression levels of cardiogenic factors such as MEF2C and NKX2-5. Acts as a ligand for ACVRL1/ALK1, BMPR1A/ALK3 and BMPR1B/ALK6, leading to activation of SMAD1, SMAD5 and SMAD8 transcription factors. Inhibits endothelial cell migration and growth. May reduce cell migration and cell matrix adhesion in breast cancer cell lines. This is Bone morphogenetic protein 10 (BMP10) from Homo sapiens (Human).